Consider the following 132-residue polypeptide: ATP synthase epsilon chain, chloroplastic (132 aa).

An N-acetylthreonine modification is found at T2.

This sequence belongs to the ATPase epsilon chain family. F-type ATPases have 2 components, CF(1) - the catalytic core - and CF(0) - the membrane proton channel. CF(1) has five subunits: alpha(3), beta(3), gamma(1), delta(1), epsilon(1). CF(0) has three main subunits: a, b and c.

The protein localises to the plastid. It localises to the chloroplast thylakoid membrane. Its function is as follows. Produces ATP from ADP in the presence of a proton gradient across the membrane. This is ATP synthase epsilon chain, chloroplastic from Arabidopsis thaliana (Mouse-ear cress).